A 182-amino-acid polypeptide reads, in one-letter code: MTGERPVHLTAIIGSFGGAVENLGAAHGIYAFAVPPEQIVEFCRFLKEHPALEFDFLSDICGVDHYPETPRFETVYHLYSLKNKWRVRIKCRLGEPPHVPTVTGVWRTANWHEREAWDMYGIRFEGHPDLRRIYMWEGFEGFPQRKDFPLRGYKDKLNPFGAEGPPPTQPDLATNDIPQGGR.

The disordered stretch occupies residues tyrosine 153–arginine 182.

The protein belongs to the complex I 30 kDa subunit family. In terms of assembly, NDH-1 is composed of 14 different subunits. Subunits NuoB, C, D, E, F, and G constitute the peripheral sector of the complex.

It is found in the cell inner membrane. It carries out the reaction a quinone + NADH + 5 H(+)(in) = a quinol + NAD(+) + 4 H(+)(out). NDH-1 shuttles electrons from NADH, via FMN and iron-sulfur (Fe-S) centers, to quinones in the respiratory chain. The immediate electron acceptor for the enzyme in this species is believed to be ubiquinone. Couples the redox reaction to proton translocation (for every two electrons transferred, four hydrogen ions are translocated across the cytoplasmic membrane), and thus conserves the redox energy in a proton gradient. In Rhizobium meliloti (strain 1021) (Ensifer meliloti), this protein is NADH-quinone oxidoreductase subunit C 2.